Here is an 875-residue protein sequence, read N- to C-terminus: MLNKFKPGEILLSLAKPNKKKIANIADFSNVSLNLSFADLNDLSFNIPLKARYNFLMKPNHVAKLMREWYLIKAEFLNRVEWFVITGLTKSENEEQTIQVRCQGLPYILHKNKIRSYQGVSKNLQEVATDCLKGTRLNIGYIDPSFNEKRRSFDVTSTRYEFLKTIWETFEAVPVFDTVKNTVSFYKKDTVSKYKGVQFSPERFMIDMEDTIDIDEVVTRLNITGKDGIVINSVNPTGQSYLDDFSYFLYPFKRDKNRNVITHSDYMDDDLCHAILDYNELVNKEGSSFHLLLNQKRDLETQKTTQENKLFTLENIELQQILDKITVAKKAGDDTKDLIKQRDAKLLEVTAKKAEISRINSQITNISQEIEKLKDRLSMDKFLGEELKKQLSYFIFEDDWTNDNIFDETELYEKGLEELSNRNAPPVDIRTNIVNLFNVNSEKAFWDRIYLGDIIRVVNKNFRTDVKATLSGMTFDFDQQSIQVTLSNGKRARSLEQEFANTLYTTKKASTEYNKKKIDYDTLLVNYNARNDRISSPVANPTILNNGTAITHVVNDNGSVDISIEWQFPNSKEDKYNIDGFLVHCYSDTSSDTYIFGSKMSSEQYLSVSYDKRIATLTGQVSNKYYTFGIQAYRTVEASIDSSGRILSDIIQPQFPSENPYLPSNSVEVKGSLSGRVNGLYTISTEAKPEDPEKGTIWINPKNNKQELFNGEEWVVSSAGSADSLNGFTASTTTSPNSIPVRNESGIISGSIDGNAEMLGGRAASDYALAENIPIPPKFAKGIYTGDGTLSKQIPLTFTPDLVKITPISPEDSQLVIESQLGGYAYQVTSTGLSLIGGDLGYGALGNNLFVTGSDSNCRGNKLNVKYIWEAYQQN.

A coiled-coil region spans residues 351–381 (AKKAEISRINSQITNISQEIEKLKDRLSMDK). Residues 537 to 648 (PVANPTILNN…SIDSSGRILS (112 aa)) form the Fibronectin type-III domain.

This is SPbeta prophage-derived uncharacterized protein YomG (yomG) from Bacillus subtilis (strain 168).